The primary structure comprises 114 residues: Gas vesicle protein J (114 aa).

Positions 63-114 (PTGTDMERVEEAAGISPDESRSLDTRSESEQMDELPGEAGASVSNTAPQEEE) are disordered. The span at 80–91 (DESRSLDTRSES) shows a compositional bias: basic and acidic residues. Over residues 104–114 (SVSNTAPQEEE) the composition is skewed to polar residues.

It belongs to the gas vesicle GvpA family. In terms of assembly, gvpF to GvpM interact with each other in vitro, and may form multi-subunit complex(es). Interacts with GvpA.

It localises to the gas vesicle. In terms of biological role, a minor component of the gas vesicle, proteins GvpF to GvpM might be involved in nucleating gas vesicle formation. Gas vesicles are hollow, gas filled proteinaceous nanostructures found in some microorganisms. They allow positioning of halobacteria at the optimal depth for growth in the poorly aerated, shallow brine pools of their habitat. Expression of a 9.5 kb mc-vac DNA fragment containing 2 divergently transcribed regions (gvpD-gvpE-gvpF-gvpG-gvpH-gvpI-gvpJ-gvpK-gvpL-gvpM and gvpA-gvpC-gvpN-gvpO) allows H.volcanii to produce gas vesicles. This Haloferax mediterranei (strain ATCC 33500 / DSM 1411 / JCM 8866 / NBRC 14739 / NCIMB 2177 / R-4) (Halobacterium mediterranei) protein is Gas vesicle protein J.